Here is a 280-residue protein sequence, read N- to C-terminus: 3-methyl-2-oxobutanoate hydroxymethyltransferase (280 aa).

The Mg(2+) site is built by D45 and D84. Residues 45-46 (DS), D84, and K114 contribute to the 3-methyl-2-oxobutanoate site. E116 lines the Mg(2+) pocket. E183 serves as the catalytic Proton acceptor.

This sequence belongs to the PanB family. As to quaternary structure, homodecamer; pentamer of dimers. Mg(2+) is required as a cofactor.

The protein localises to the cytoplasm. The enzyme catalyses 3-methyl-2-oxobutanoate + (6R)-5,10-methylene-5,6,7,8-tetrahydrofolate + H2O = 2-dehydropantoate + (6S)-5,6,7,8-tetrahydrofolate. It participates in cofactor biosynthesis; (R)-pantothenate biosynthesis; (R)-pantoate from 3-methyl-2-oxobutanoate: step 1/2. Catalyzes the reversible reaction in which hydroxymethyl group from 5,10-methylenetetrahydrofolate is transferred onto alpha-ketoisovalerate to form ketopantoate. This is 3-methyl-2-oxobutanoate hydroxymethyltransferase from Clostridium kluyveri (strain ATCC 8527 / DSM 555 / NBRC 12016 / NCIMB 10680 / K1).